A 141-amino-acid polypeptide reads, in one-letter code: MALERTFSIIKPDAVERNLIGEIYHRIEKAGLRIIAAKMVHLNDEQASGFYAEHEGKEFFPALKEFMTSGPIMVQVLEGENAIARYRELMGKTNPEEAACGTIRADYALSMRHNSVHGSDSPASAAREIAFFFPESEICPR.

ATP-binding residues include lysine 11, phenylalanine 59, arginine 87, threonine 93, arginine 104, and asparagine 114. Catalysis depends on histidine 117, which acts as the Pros-phosphohistidine intermediate.

It belongs to the NDK family. As to quaternary structure, homotetramer. Requires Mg(2+) as cofactor.

Its subcellular location is the cytoplasm. It catalyses the reaction a 2'-deoxyribonucleoside 5'-diphosphate + ATP = a 2'-deoxyribonucleoside 5'-triphosphate + ADP. The enzyme catalyses a ribonucleoside 5'-diphosphate + ATP = a ribonucleoside 5'-triphosphate + ADP. Its function is as follows. Major role in the synthesis of nucleoside triphosphates other than ATP. The ATP gamma phosphate is transferred to the NDP beta phosphate via a ping-pong mechanism, using a phosphorylated active-site intermediate. The chain is Nucleoside diphosphate kinase from Vibrio vulnificus (strain CMCP6).